Consider the following 331-residue polypeptide: Serine/threonine-protein phosphatase 6 catalytic subunit (331 aa).

Mn(2+) contacts are provided by D79, H81, D107, and N139. H140 (proton donor) is an active-site residue. 2 residues coordinate Mn(2+): H189 and H264.

This sequence belongs to the PPP phosphatase family. PP-6 (PP-V) subfamily. Forms a complex composed of catalytic subunit pph-6 and regulatory subunit saps-1; the interaction increases pph-6 and saps-1 protein stability. Mn(2+) is required as a cofactor.

The protein resides in the cytoplasm. The protein localises to the cell cortex. It localises to the cytoskeleton. It is found in the spindle pole. It carries out the reaction O-phospho-L-seryl-[protein] + H2O = L-seryl-[protein] + phosphate. It catalyses the reaction O-phospho-L-threonyl-[protein] + H2O = L-threonyl-[protein] + phosphate. Catalytic subunit of protein phosphatase 6 (PP6). In complex with saps-1, promotes actomyosin contractility during cytokinesis by regulating the organization of cortical non-muscle myosin II nmy-2 and thus contributing to correct spindle positioning. Also required for the proper generation of pulling forces on spindle poles during anaphase by regulating the cortical localization of gpr-1, gpr-2 and lin-5. In Caenorhabditis elegans, this protein is Serine/threonine-protein phosphatase 6 catalytic subunit.